A 56-amino-acid polypeptide reads, in one-letter code: UPF0391 membrane protein Noc_0482 (56 aa).

2 helical membrane passes run Met-1–Thr-21 and His-29–Gly-49.

This sequence belongs to the UPF0391 family.

It is found in the cell membrane. This is UPF0391 membrane protein Noc_0482 from Nitrosococcus oceani (strain ATCC 19707 / BCRC 17464 / JCM 30415 / NCIMB 11848 / C-107).